The sequence spans 354 residues: Ornithine transcarbamylase, mitochondrial (354 aa).

A mitochondrion-targeting transit peptide spans 1–32 (MLFNLKNLYRITKLTQNSKHLPRHFCRGPPNQ). Residues 90 to 94 (STRTR), arginine 141, and histidine 168 each bind carbamoyl phosphate. Arginine 141 contributes to the L-ornithine binding site. L-ornithine-binding positions include asparagine 199, 263–267 (DTWIS), 302–305 (HCLP), and arginine 330. Cysteine 303 is a catalytic residue. Position 330 (arginine 330) interacts with carbamoyl phosphate.

It belongs to the aspartate/ornithine carbamoyltransferase superfamily. OTCase family. Homotrimer. Cleavage of the precursor form to the active form occurs only in the kidney. As to expression, expressed in kidney, brain, heart, liver, pancreas, gizzard, small intestine and breast muscle. More abundant in mitochondrion-rich organs (heart, liver and brain) than in other organs. Activity is only detected in the kidney.

It localises to the mitochondrion matrix. The enzyme catalyses carbamoyl phosphate + L-ornithine = L-citrulline + phosphate + H(+). It participates in nitrogen metabolism; urea cycle; L-citrulline from L-ornithine and carbamoyl phosphate: step 1/1. Inhibition by ornithine increases at higher pH. Functionally, catalyzes the second step of the urea cycle, the condensation of carbamoyl phosphate with L-ornithine to form L-citrulline. The urea cycle ensures the detoxification of ammonia by converting it to urea for excretion. This is Ornithine transcarbamylase, mitochondrial from Gallus gallus (Chicken).